Reading from the N-terminus, the 62-residue chain is MEWKTCSFCEGKIEPGCGKKYVKKDGSVMQFCSSKCEKNFKLGRVGRKLKWTNMFKRMNKGQ.

Residues C6, C9, C32, and C36 each contribute to the Zn(2+) site. The C4-type zinc finger occupies 6–36 (CSFCEGKIEPGCGKKYVKKDGSVMQFCSSKC).

The protein belongs to the eukaryotic ribosomal protein eL24 family. Part of the 50S ribosomal subunit. Forms a cluster with proteins L3 and L14. The cofactor is Zn(2+).

Binds to the 23S rRNA. This is Large ribosomal subunit protein eL24 from Methanococcus vannielii (strain ATCC 35089 / DSM 1224 / JCM 13029 / OCM 148 / SB).